The chain runs to 49 residues: Small, acid-soluble spore protein O (49 aa).

The segment at 1-49 (MVKRKANHVIPGMNDASAQGKGAGYNEELSNEPLTEAQKQNNKKRKKNQ) is disordered.

This sequence belongs to the SspO family.

The protein resides in the spore core. This chain is Small, acid-soluble spore protein O, found in Anoxybacillus flavithermus (strain DSM 21510 / WK1).